The following is a 316-amino-acid chain: MTKEFHHVTVLLHETVDMLDIKPDGIYVDATLGGSGHSAYLLSKLGEEGHLYCFDQDQKAIDNAQVTLKSYIDKGQVTFIKDNFRHLKARLTALGVDEIDGILYDLGVSSPQLDERERGFSYKQDAPLDMRMDRQSLLTAYEVVNTYPFNDLVKIFFKYGEDKFSKQIARKIEQARAIKPIETTTELAELIKAAKPAKELKKKGHPAKQIFQAIRIEVNDELGAADESIQDAMELLALDGRISVITFHSLEDRLTKQLFKEASTVDVPKGLPLIPEDMKPKFELVSRKPILPSHSELTANKRAHSAKLRVAKKIRK.

S-adenosyl-L-methionine is bound by residues 35–37, D55, F84, D105, and Q112; that span reads SGH.

Belongs to the methyltransferase superfamily. RsmH family.

It localises to the cytoplasm. It catalyses the reaction cytidine(1402) in 16S rRNA + S-adenosyl-L-methionine = N(4)-methylcytidine(1402) in 16S rRNA + S-adenosyl-L-homocysteine + H(+). Specifically methylates the N4 position of cytidine in position 1402 (C1402) of 16S rRNA. The chain is Ribosomal RNA small subunit methyltransferase H from Streptococcus pyogenes serotype M18 (strain MGAS8232).